The primary structure comprises 174 residues: NADH-quinone oxidoreductase subunit I (174 aa).

2 consecutive 4Fe-4S ferredoxin-type domains span residues leucine 44–aspartate 74 and arginine 90–aspartate 119. The [4Fe-4S] cluster site is built by cysteine 54, cysteine 57, cysteine 60, cysteine 64, cysteine 99, cysteine 102, cysteine 105, and cysteine 109.

Belongs to the complex I 23 kDa subunit family. In terms of assembly, NDH-1 is composed of 14 different subunits. Subunits NuoA, H, J, K, L, M, N constitute the membrane sector of the complex. [4Fe-4S] cluster serves as cofactor.

It localises to the cell membrane. It carries out the reaction a quinone + NADH + 5 H(+)(in) = a quinol + NAD(+) + 4 H(+)(out). In terms of biological role, NDH-1 shuttles electrons from NADH, via FMN and iron-sulfur (Fe-S) centers, to quinones in the respiratory chain. The immediate electron acceptor for the enzyme in this species is believed to be menaquinone. Couples the redox reaction to proton translocation (for every two electrons transferred, four hydrogen ions are translocated across the cytoplasmic membrane), and thus conserves the redox energy in a proton gradient. This Mycobacterium sp. (strain JLS) protein is NADH-quinone oxidoreductase subunit I.